The primary structure comprises 98 residues: Large ribosomal subunit protein mL53 (98 aa).

The protein belongs to the mitochondrion-specific ribosomal protein mL53 family. Component of the mitochondrial large ribosomal subunit (mt-LSU). Mature yeast 74S mitochondrial ribosomes consist of a small (37S) and a large (54S) subunit. The 37S small subunit contains a 15S ribosomal RNA (15S mt-rRNA) and 34 different proteins. The 54S large subunit contains a 21S rRNA (21S mt-rRNA) and 46 different proteins.

The protein resides in the mitochondrion. Functionally, component of the mitochondrial ribosome (mitoribosome), a dedicated translation machinery responsible for the synthesis of mitochondrial genome-encoded proteins, including at least some of the essential transmembrane subunits of the mitochondrial respiratory chain. The mitoribosomes are attached to the mitochondrial inner membrane and translation products are cotranslationally integrated into the membrane. This Saccharomyces cerevisiae (strain ATCC 204508 / S288c) (Baker's yeast) protein is Large ribosomal subunit protein mL53 (MRPL44).